Consider the following 265-residue polypeptide: Deoxyribose-phosphate aldolase 2 (265 aa).

The Proton donor/acceptor role is filled by Asp-108. Lys-173 (schiff-base intermediate with acetaldehyde) is an active-site residue. Lys-207 (proton donor/acceptor) is an active-site residue.

Belongs to the DeoC/FbaB aldolase family. DeoC type 2 subfamily.

The protein resides in the cytoplasm. It carries out the reaction 2-deoxy-D-ribose 5-phosphate = D-glyceraldehyde 3-phosphate + acetaldehyde. The protein operates within carbohydrate degradation; 2-deoxy-D-ribose 1-phosphate degradation; D-glyceraldehyde 3-phosphate and acetaldehyde from 2-deoxy-alpha-D-ribose 1-phosphate: step 2/2. Catalyzes a reversible aldol reaction between acetaldehyde and D-glyceraldehyde 3-phosphate to generate 2-deoxy-D-ribose 5-phosphate. This chain is Deoxyribose-phosphate aldolase 2 (deoC2), found in Yersinia pestis.